Reading from the N-terminus, the 511-residue chain is Vesicular acetylcholine transporter (511 aa).

Residues 1-36 (MVVGQAKAAMGKISSAIGERSKRISGAMNEPLRKRK) are Cytoplasmic-facing. The chain crosses the membrane as a helical span at residues 37–57 (ILLVIVCIAMLLDNMLYMVIV). The Lumenal, vesicle segment spans residues 58 to 108 (PIVPNYLETIRTYKLVYITIPSNGTNGSLLNSTQRAVLERNPNANEDIQIG). Residues Asn80, Asn83, and Asn88 are each glycosylated (N-linked (GlcNAc...) asparagine). The chain crosses the membrane as a helical span at residues 109 to 129 (VLFASKAILQLLSNPFTGTFI). The Cytoplasmic portion of the chain corresponds to 130–135 (DRVGYD). The helical transmembrane segment at 136-156 (IPLLIGLTIMFFSTITFAFGE) threads the bilayer. Residues 157-165 (SYAILFAAR) are Lumenal, vesicle-facing. A helical membrane pass occupies residues 166–186 (SLQGLGSAFADTSGIAMIADK). The Cytoplasmic segment spans residues 187–197 (YTEESERTQAL). A helical transmembrane segment spans residues 198–218 (GIALAFISFGSLVAPPFGGVL). Residues 219-225 (YQFAGKW) lie on the Lumenal, vesicle side of the membrane. Residues 226–246 (VPFLVLSFVCLLDGILLLMVV) form a helical membrane-spanning segment. Residues 247–267 (TPFASRTRGNTLQGTPIHKLM) lie on the Cytoplasmic side of the membrane. Residues 268–288 (IDPYIAVVAGALTTCNIPLAF) traverse the membrane as a helical segment. Residues 289 to 306 (LEPTISNWMKKTMNASEW) are Lumenal, vesicle-facing. The N-linked (GlcNAc...) asparagine glycan is linked to Asn302. Residues 307–327 (QMGITWLPAFFPHILGVYITV) traverse the membrane as a helical segment. Topologically, residues 328–337 (KLAAKYPNYQ) are cytoplasmic. The helical transmembrane segment at 338-358 (WLYGAFGLVIIGVSSCTIPAC) threads the bilayer. Residues 359 to 363 (RNFEE) lie on the Lumenal, vesicle side of the membrane. The chain crosses the membrane as a helical span at residues 364–384 (LIIPLCALCFGIALVDTALLP). Residues 385-400 (TLAFLVDIRYVSVYGS) are Cytoplasmic-facing. A helical transmembrane segment spans residues 401–421 (VYAIADISYSVAYALGPIMAG). Over 422–428 (QIVHDLG) the chain is Lumenal, vesicle. The helical transmembrane segment at 429 to 449 (FVQLNLGMGLVNILYAPALLF) threads the bilayer. Over 450–511 (LRNVCQMKPS…VLSDQEGYSE (62 aa)) the chain is Cytoplasmic. A disordered region spans residues 486–511 (AKEPHGTSSGNHSVHAVLSDQEGYSE).

The protein belongs to the major facilitator superfamily. Vesicular transporter family. As to expression, high expression in the electric lobe of the brain.

It is found in the membrane. Functionally, involved in acetylcholine transport into synaptic vesicles. The polypeptide is Vesicular acetylcholine transporter (Torpedo torpedo (Common torpedo)).